The chain runs to 127 residues: MPTFKQLLKKPRKIVLTKSKSIALIQCPQKKGICMKVYTTSPKKPNSAERKVAKVNLTNGKSIIGYISGEGHTLQEHSLVLVRGGRVKDLPGVQYHFVRGVYDLHAVGTRKKSRSKYGKKLFKAPIV.

It belongs to the universal ribosomal protein uS12 family.

Its subcellular location is the mitochondrion. In terms of biological role, protein S12 is involved in the translation initiation step. This chain is Small ribosomal subunit protein uS12m (RPS12), found in Chondrus crispus (Carrageen Irish moss).